We begin with the raw amino-acid sequence, 273 residues long: NADPH-dependent 7-cyano-7-deazaguanine reductase (273 aa).

Val-81–Ser-83 is a binding site for substrate. An NADPH-binding site is contributed by Ser-83–Lys-84. Cys-179 acts as the Thioimide intermediate in catalysis. Asp-186 (proton donor) is an active-site residue. Ala-218–Glu-219 is a binding site for substrate. Residue Arg-247–Gly-248 participates in NADPH binding.

This sequence belongs to the GTP cyclohydrolase I family. QueF type 2 subfamily. In terms of assembly, homodimer.

Its subcellular location is the cytoplasm. It carries out the reaction 7-aminomethyl-7-carbaguanine + 2 NADP(+) = 7-cyano-7-deazaguanine + 2 NADPH + 3 H(+). It functions in the pathway tRNA modification; tRNA-queuosine biosynthesis. Functionally, catalyzes the NADPH-dependent reduction of 7-cyano-7-deazaguanine (preQ0) to 7-aminomethyl-7-deazaguanine (preQ1). The sequence is that of NADPH-dependent 7-cyano-7-deazaguanine reductase from Rickettsia massiliae (strain Mtu5).